Consider the following 294-residue polypeptide: Undecaprenyl-diphosphatase (294 aa).

Transmembrane regions (helical) follow at residues 2-22 (SMIYITLNIIAYVIDVRSLIL), 27-47 (LVFSLILGIVEGLTEFLPISS), 65-85 (VIAFTVIIQLGAILSITKIFW), 110-130 (LCIRHIFLGTFPGIMLGMIFY), 135-155 (LIFELTYIMYGLIIGGIFLLV), 172-192 (ITYLQAFLIGCFQCLAFWPGF), 215-235 (FSFFLAVPIIFGSAVLTLYHY), 239-259 (IGLMDVLLLIAGSATAFFIAL), and 272-292 (VSLIPFAIYRFLLAGGIYWGL).

Belongs to the UppP family.

It is found in the cell inner membrane. It carries out the reaction di-trans,octa-cis-undecaprenyl diphosphate + H2O = di-trans,octa-cis-undecaprenyl phosphate + phosphate + H(+). Catalyzes the dephosphorylation of undecaprenyl diphosphate (UPP). Confers resistance to bacitracin. This is Undecaprenyl-diphosphatase from Blochmanniella pennsylvanica (strain BPEN).